A 497-amino-acid chain; its full sequence is Glycerol kinase (497 aa).

T12 is a binding site for ADP. T12, T13, and S14 together coordinate ATP. T12 contacts sn-glycerol 3-phosphate. R16 lines the ADP pocket. Residues R82, E83, Y134, and D243 each coordinate sn-glycerol 3-phosphate. Residues R82, E83, Y134, D243, and Q244 each coordinate glycerol. Residues T265 and G308 each coordinate ADP. Residues T265, G308, Q312, and G409 each contribute to the ATP site. Residues G409 and N413 each coordinate ADP.

The protein belongs to the FGGY kinase family. In terms of assembly, homotetramer and homodimer (in equilibrium).

The catalysed reaction is glycerol + ATP = sn-glycerol 3-phosphate + ADP + H(+). The protein operates within polyol metabolism; glycerol degradation via glycerol kinase pathway; sn-glycerol 3-phosphate from glycerol: step 1/1. With respect to regulation, activated by phosphorylation and inhibited by fructose 1,6-bisphosphate (FBP). Its function is as follows. Key enzyme in the regulation of glycerol uptake and metabolism. Catalyzes the phosphorylation of glycerol to yield sn-glycerol 3-phosphate. In Thermoanaerobacter pseudethanolicus (strain ATCC 33223 / 39E) (Clostridium thermohydrosulfuricum), this protein is Glycerol kinase.